The chain runs to 379 residues: Alanine racemase (379 aa).

Lys-37 (proton acceptor; specific for D-alanine) is an active-site residue. Lys-37 carries the N6-(pyridoxal phosphate)lysine modification. Arg-137 contacts substrate. The Proton acceptor; specific for L-alanine role is filled by Tyr-269. Met-317 lines the substrate pocket.

This sequence belongs to the alanine racemase family. The cofactor is pyridoxal 5'-phosphate.

The enzyme catalyses L-alanine = D-alanine. Its pathway is amino-acid biosynthesis; D-alanine biosynthesis; D-alanine from L-alanine: step 1/1. In terms of biological role, catalyzes the interconversion of L-alanine and D-alanine. May also act on other amino acids. The polypeptide is Alanine racemase (alr) (Geobacter sp. (strain M21)).